The following is a 320-amino-acid chain: Ferrochelatase (320 aa).

The Fe cation site is built by H194 and E275.

The protein belongs to the ferrochelatase family. As to quaternary structure, monomer.

Its subcellular location is the cytoplasm. It carries out the reaction heme b + 2 H(+) = protoporphyrin IX + Fe(2+). The protein operates within porphyrin-containing compound metabolism; protoheme biosynthesis; protoheme from protoporphyrin-IX: step 1/1. Its function is as follows. Catalyzes the ferrous insertion into protoporphyrin IX. In Salmonella paratyphi A (strain ATCC 9150 / SARB42), this protein is Ferrochelatase.